Consider the following 102-residue polypeptide: NADH-quinone oxidoreductase subunit K (102 aa).

Transmembrane regions (helical) follow at residues 5 to 25 (LSHY…GIFL), 31 to 51 (IVIL…MVAF), and 65 to 85 (LFIL…LVVF).

The protein belongs to the complex I subunit 4L family. NDH-1 is composed of 14 different subunits. Subunits NuoA, H, J, K, L, M, N constitute the membrane sector of the complex.

The protein localises to the cell inner membrane. It carries out the reaction a quinone + NADH + 5 H(+)(in) = a quinol + NAD(+) + 4 H(+)(out). Functionally, NDH-1 shuttles electrons from NADH, via FMN and iron-sulfur (Fe-S) centers, to quinones in the respiratory chain. The immediate electron acceptor for the enzyme in this species is believed to be ubiquinone. Couples the redox reaction to proton translocation (for every two electrons transferred, four hydrogen ions are translocated across the cytoplasmic membrane), and thus conserves the redox energy in a proton gradient. The sequence is that of NADH-quinone oxidoreductase subunit K from Agrobacterium fabrum (strain C58 / ATCC 33970) (Agrobacterium tumefaciens (strain C58)).